The chain runs to 476 residues: Glutamate--tRNA ligase 1 (476 aa).

The short motif at 9 to 19 (PSPTGFLHIGG) is the 'HIGH' region element. Residues 238-242 (KLSKR) carry the 'KMSKS' region motif. Residue lysine 241 coordinates ATP.

Belongs to the class-I aminoacyl-tRNA synthetase family. Glutamate--tRNA ligase type 1 subfamily. As to quaternary structure, monomer.

It localises to the cytoplasm. It catalyses the reaction tRNA(Glu) + L-glutamate + ATP = L-glutamyl-tRNA(Glu) + AMP + diphosphate. Its function is as follows. Catalyzes the attachment of glutamate to tRNA(Glu) in a two-step reaction: glutamate is first activated by ATP to form Glu-AMP and then transferred to the acceptor end of tRNA(Glu). This chain is Glutamate--tRNA ligase 1, found in Bartonella tribocorum (strain CIP 105476 / IBS 506).